The sequence spans 155 residues: Transcription antitermination protein NusB (155 aa).

This sequence belongs to the NusB family.

Its function is as follows. Involved in transcription antitermination. Required for transcription of ribosomal RNA (rRNA) genes. Binds specifically to the boxA antiterminator sequence of the ribosomal RNA (rrn) operons. In Aliivibrio fischeri (strain ATCC 700601 / ES114) (Vibrio fischeri), this protein is Transcription antitermination protein NusB.